A 442-amino-acid chain; its full sequence is Glutamyl-tRNA(Gln) amidotransferase subunit A (442 aa).

Catalysis depends on charge relay system residues Lys50 and Ser125. The active-site Acyl-ester intermediate is Ser149.

The protein belongs to the amidase family. GatA subfamily. Heterotrimer of A, B and C subunits.

It carries out the reaction L-glutamyl-tRNA(Gln) + L-glutamine + ATP + H2O = L-glutaminyl-tRNA(Gln) + L-glutamate + ADP + phosphate + H(+). In terms of biological role, allows the formation of correctly charged Gln-tRNA(Gln) through the transamidation of misacylated Glu-tRNA(Gln) in organisms which lack glutaminyl-tRNA synthetase. The reaction takes place in the presence of glutamine and ATP through an activated gamma-phospho-Glu-tRNA(Gln). The sequence is that of Glutamyl-tRNA(Gln) amidotransferase subunit A from Nitratiruptor sp. (strain SB155-2).